Here is a 314-residue protein sequence, read N- to C-terminus: 4-hydroxy-3-methylbut-2-enyl diphosphate reductase (314 aa).

[4Fe-4S] cluster is bound at residue C12. Residues H43 and H81 each contribute to the (2E)-4-hydroxy-3-methylbut-2-enyl diphosphate site. The dimethylallyl diphosphate site is built by H43 and H81. H43 and H81 together coordinate isopentenyl diphosphate. C103 lines the [4Fe-4S] cluster pocket. A (2E)-4-hydroxy-3-methylbut-2-enyl diphosphate-binding site is contributed by H131. H131 lines the dimethylallyl diphosphate pocket. Isopentenyl diphosphate is bound at residue H131. E133 acts as the Proton donor in catalysis. T170 contacts (2E)-4-hydroxy-3-methylbut-2-enyl diphosphate. [4Fe-4S] cluster is bound at residue C198. S226, N228, and S271 together coordinate (2E)-4-hydroxy-3-methylbut-2-enyl diphosphate. Residues S226, N228, and S271 each contribute to the dimethylallyl diphosphate site. The isopentenyl diphosphate site is built by S226, N228, and S271.

This sequence belongs to the IspH family. [4Fe-4S] cluster serves as cofactor.

The enzyme catalyses isopentenyl diphosphate + 2 oxidized [2Fe-2S]-[ferredoxin] + H2O = (2E)-4-hydroxy-3-methylbut-2-enyl diphosphate + 2 reduced [2Fe-2S]-[ferredoxin] + 2 H(+). It catalyses the reaction dimethylallyl diphosphate + 2 oxidized [2Fe-2S]-[ferredoxin] + H2O = (2E)-4-hydroxy-3-methylbut-2-enyl diphosphate + 2 reduced [2Fe-2S]-[ferredoxin] + 2 H(+). It participates in isoprenoid biosynthesis; dimethylallyl diphosphate biosynthesis; dimethylallyl diphosphate from (2E)-4-hydroxy-3-methylbutenyl diphosphate: step 1/1. It functions in the pathway isoprenoid biosynthesis; isopentenyl diphosphate biosynthesis via DXP pathway; isopentenyl diphosphate from 1-deoxy-D-xylulose 5-phosphate: step 6/6. In terms of biological role, catalyzes the conversion of 1-hydroxy-2-methyl-2-(E)-butenyl 4-diphosphate (HMBPP) into a mixture of isopentenyl diphosphate (IPP) and dimethylallyl diphosphate (DMAPP). Acts in the terminal step of the DOXP/MEP pathway for isoprenoid precursor biosynthesis. The polypeptide is 4-hydroxy-3-methylbut-2-enyl diphosphate reductase (Bacillus velezensis (strain DSM 23117 / BGSC 10A6 / LMG 26770 / FZB42) (Bacillus amyloliquefaciens subsp. plantarum)).